The following is a 526-amino-acid chain: Peptide chain release factor 3 (526 aa).

The region spanning 9 to 277 is the tr-type G domain; it reads DKRRTFAIIS…GIVEWAPKPQ (269 aa). Residues 18–25, 86–90, and 140–143 contribute to the GTP site; these read SHPDAGKT, DTPGH, and NKLD.

Belongs to the TRAFAC class translation factor GTPase superfamily. Classic translation factor GTPase family. PrfC subfamily.

It localises to the cytoplasm. Functionally, increases the formation of ribosomal termination complexes and stimulates activities of RF-1 and RF-2. It binds guanine nucleotides and has strong preference for UGA stop codons. It may interact directly with the ribosome. The stimulation of RF-1 and RF-2 is significantly reduced by GTP and GDP, but not by GMP. The polypeptide is Peptide chain release factor 3 (Shewanella sediminis (strain HAW-EB3)).